The sequence spans 472 residues: 3-isopropylmalate dehydratase large subunit (472 aa).

Residues Cys-352, Cys-412, and Cys-415 each contribute to the [4Fe-4S] cluster site.

The protein belongs to the aconitase/IPM isomerase family. LeuC type 1 subfamily. Heterodimer of LeuC and LeuD. The cofactor is [4Fe-4S] cluster.

It catalyses the reaction (2R,3S)-3-isopropylmalate = (2S)-2-isopropylmalate. Its pathway is amino-acid biosynthesis; L-leucine biosynthesis; L-leucine from 3-methyl-2-oxobutanoate: step 2/4. In terms of biological role, catalyzes the isomerization between 2-isopropylmalate and 3-isopropylmalate, via the formation of 2-isopropylmaleate. The polypeptide is 3-isopropylmalate dehydratase large subunit (Roseiflexus castenholzii (strain DSM 13941 / HLO8)).